Consider the following 478-residue polypeptide: Protein nucleotidyltransferase YdiU (478 aa).

Residues Gly-84, Gly-86, Arg-87, Lys-107, Asp-119, Gly-120, Arg-170, and Arg-177 each coordinate ATP. Asp-246 functions as the Proton acceptor in the catalytic mechanism. Residues Asn-247 and Asp-256 each contribute to the Mg(2+) site. Asp-256 lines the ATP pocket.

It belongs to the SELO family. The cofactor is Mg(2+). Mn(2+) serves as cofactor.

It catalyses the reaction L-seryl-[protein] + ATP = 3-O-(5'-adenylyl)-L-seryl-[protein] + diphosphate. The enzyme catalyses L-threonyl-[protein] + ATP = 3-O-(5'-adenylyl)-L-threonyl-[protein] + diphosphate. It carries out the reaction L-tyrosyl-[protein] + ATP = O-(5'-adenylyl)-L-tyrosyl-[protein] + diphosphate. The catalysed reaction is L-histidyl-[protein] + UTP = N(tele)-(5'-uridylyl)-L-histidyl-[protein] + diphosphate. It catalyses the reaction L-seryl-[protein] + UTP = O-(5'-uridylyl)-L-seryl-[protein] + diphosphate. The enzyme catalyses L-tyrosyl-[protein] + UTP = O-(5'-uridylyl)-L-tyrosyl-[protein] + diphosphate. In terms of biological role, nucleotidyltransferase involved in the post-translational modification of proteins. It can catalyze the addition of adenosine monophosphate (AMP) or uridine monophosphate (UMP) to a protein, resulting in modifications known as AMPylation and UMPylation. In Shigella boydii serotype 4 (strain Sb227), this protein is Protein nucleotidyltransferase YdiU.